The primary structure comprises 215 residues: Sodium channel regulatory subunit beta-2 (215 aa).

The signal sequence occupies residues 1-29 (MHRDAWLPRPAFSLTGLSLFFSLVPPGRS). Residues 30–157 (MEVTVPATLN…XEEPPERDST (128 aa)) lie on the Extracellular side of the membrane. Positions 32 to 154 (VTVPATLNVL…QVLXEEPPER (123 aa)) constitute an Ig-like C2-type domain. N-linked (GlcNAc...) asparagine glycosylation is found at Asn-42, Asn-66, and Asn-74. 2 disulfide bridges follow: Cys-50/Cys-127 and Cys-72/Cys-75. Residues 158–179 (VAVIVGASVGGFLAVVILVLMV) traverse the membrane as a helical segment. The Cytoplasmic segment spans residues 180–215 (VKCVRRKKEQKLSTDDLKTEEEGKTDGEGNPDDGAK). The disordered stretch occupies residues 187-215 (KEQKLSTDDLKTEEEGKTDGEGNPDDGAK). Over residues 189-215 (QKLSTDDLKTEEEGKTDGEGNPDDGAK) the composition is skewed to basic and acidic residues. Residue Ser-192 is modified to Phosphoserine. The residue at position 204 (Thr-204) is a Phosphothreonine.

This sequence belongs to the sodium channel auxiliary subunit SCN2B (TC 8.A.17) family. In terms of assembly, a voltage-gated sodium (Nav) channel consists of an ion-conducting pore-forming alpha subunit functional on its own that is regulated by one or more beta subunits. The beta subunit SCN2B is disulfide-linked to the pore-forming alpha subunit. Interacts with SCN1A; regulatory subunit of SCN1A/Nav1.1. Interacts with SCN2A; regulatory subunit of SCN2A/Nav1.2. Interacts with SCN3A; regulatory subunit of SCN3A/Nav1.3. Interacts with SCN5A; regulatory subunit of SCN5A/Nav1.5. Interacts with SCN8A; regulatory subunit of SCN8A/Nav1.6. Interacts with SCN9A; regulatory subunit of SCN9A/Nav1.7. Interacts with SCN10A; regulatory subunit of SCN10A/Nav1.8. Interacts with TNR; may play a crucial role in clustering and regulation of activity of SCN2B-containing Nav channels at nodes of Ranvier.

It is found in the cell membrane. Its subcellular location is the cell projection. It localises to the axon. Its function is as follows. Regulatory subunit of multiple voltage-gated sodium (Nav) channels, that directly mediate the depolarization of excitable membranes. Navs, also called VGSCs (voltage-gated sodium channels) or VDSCs (voltage-dependent sodium channels), operate by switching between closed and open conformations depending on the voltage difference across the membrane. In the open conformation they allow Na(+) ions to selectively pass through the pore, along their electrochemical gradient. The influx of Na+ ions provokes membrane depolarization, initiating the propagation of electrical signals throughout cells and tissues. The accessory beta subunits participate in localization and functional modulation of the Nav channels. Modulates the activity of SCN1A/Nav1.1, SCN2A/Nav1.2, SCN2A/Nav1.3, SCN5A/Nav1.5, SCN8A/Nav1.6, SCN9A/Nav1.7 and SCN10A/Nav1.8. The chain is Sodium channel regulatory subunit beta-2 from Canis lupus familiaris (Dog).